We begin with the raw amino-acid sequence, 369 residues long: Pyrimidine monooxygenase RutA (369 aa).

FMN is bound by residues 49–50 (IK), N115, E124, 140–141 (RY), and S190.

Belongs to the NtaA/SnaA/DszA monooxygenase family. RutA subfamily.

The enzyme catalyses uracil + FMNH2 + NADH + O2 = (Z)-3-ureidoacrylate + FMN + NAD(+) + H2O + H(+). The catalysed reaction is thymine + FMNH2 + NADH + O2 = (Z)-2-methylureidoacrylate + FMN + NAD(+) + H2O + H(+). Functionally, catalyzes the pyrimidine ring opening between N-3 and C-4 by an unusual flavin hydroperoxide-catalyzed mechanism, adding oxygen atoms in the process to yield ureidoacrylate peracid, that immediately reacts with FMN forming ureidoacrylate and FMN-N(5)-oxide. The FMN-N(5)-oxide reacts spontaneously with NADH to produce FMN. Requires the flavin reductase RutF to regenerate FMN in vivo. This is Pyrimidine monooxygenase RutA from Acinetobacter baylyi (strain ATCC 33305 / BD413 / ADP1).